The sequence spans 327 residues: Mycothiol acetyltransferase (327 aa).

N-acetyltransferase domains lie at 11-159 (EPHG…VTLP) and 162-327 (VQIR…EGTS). Position 42 (Glu42) interacts with 1D-myo-inositol 2-(L-cysteinylamino)-2-deoxy-alpha-D-glucopyranoside. An acetyl-CoA-binding site is contributed by 89 to 91 (LVI). Residues Glu189, Lys228, and Glu251 each contribute to the 1D-myo-inositol 2-(L-cysteinylamino)-2-deoxy-alpha-D-glucopyranoside site. Acetyl-CoA-binding positions include 255 to 257 (LGV) and 262 to 268 (QGLGLGR). A 1D-myo-inositol 2-(L-cysteinylamino)-2-deoxy-alpha-D-glucopyranoside-binding site is contributed by Tyr289. 294-299 (NAPAIR) serves as a coordination point for acetyl-CoA.

Belongs to the acetyltransferase family. MshD subfamily. Monomer.

The catalysed reaction is 1D-myo-inositol 2-(L-cysteinylamino)-2-deoxy-alpha-D-glucopyranoside + acetyl-CoA = mycothiol + CoA + H(+). Functionally, catalyzes the transfer of acetyl from acetyl-CoA to desacetylmycothiol (Cys-GlcN-Ins) to form mycothiol. This Acidothermus cellulolyticus (strain ATCC 43068 / DSM 8971 / 11B) protein is Mycothiol acetyltransferase.